The following is a 345-amino-acid chain: S-adenosylmethionine:tRNA ribosyltransferase-isomerase (345 aa).

It belongs to the QueA family. As to quaternary structure, monomer.

It localises to the cytoplasm. It carries out the reaction 7-aminomethyl-7-carbaguanosine(34) in tRNA + S-adenosyl-L-methionine = epoxyqueuosine(34) in tRNA + adenine + L-methionine + 2 H(+). Its pathway is tRNA modification; tRNA-queuosine biosynthesis. Transfers and isomerizes the ribose moiety from AdoMet to the 7-aminomethyl group of 7-deazaguanine (preQ1-tRNA) to give epoxyqueuosine (oQ-tRNA). This chain is S-adenosylmethionine:tRNA ribosyltransferase-isomerase, found in Shewanella putrefaciens (strain CN-32 / ATCC BAA-453).